We begin with the raw amino-acid sequence, 422 residues long: Glutamyl-tRNA reductase (422 aa).

Substrate-binding positions include 49 to 52, Ser-107, 112 to 114, and Gln-118; these read TCNR and EPQ. Residue Cys-50 is the Nucleophile of the active site. 187–192 provides a ligand contact to NADP(+); that stretch reads GAGETI.

The protein belongs to the glutamyl-tRNA reductase family. Homodimer.

It catalyses the reaction (S)-4-amino-5-oxopentanoate + tRNA(Glu) + NADP(+) = L-glutamyl-tRNA(Glu) + NADPH + H(+). It participates in porphyrin-containing compound metabolism; protoporphyrin-IX biosynthesis; 5-aminolevulinate from L-glutamyl-tRNA(Glu): step 1/2. Its function is as follows. Catalyzes the NADPH-dependent reduction of glutamyl-tRNA(Glu) to glutamate 1-semialdehyde (GSA). The protein is Glutamyl-tRNA reductase of Pseudomonas aeruginosa (strain ATCC 15692 / DSM 22644 / CIP 104116 / JCM 14847 / LMG 12228 / 1C / PRS 101 / PAO1).